The sequence spans 72 residues: Translation initiation factor IF-1 (72 aa).

The S1-like domain occupies 1–72 (MAKDDVIEID…DKGRITYRYK (72 aa)).

It belongs to the IF-1 family. As to quaternary structure, component of the 30S ribosomal translation pre-initiation complex which assembles on the 30S ribosome in the order IF-2 and IF-3, IF-1 and N-formylmethionyl-tRNA(fMet); mRNA recruitment can occur at any time during PIC assembly.

The protein resides in the cytoplasm. Functionally, one of the essential components for the initiation of protein synthesis. Stabilizes the binding of IF-2 and IF-3 on the 30S subunit to which N-formylmethionyl-tRNA(fMet) subsequently binds. Helps modulate mRNA selection, yielding the 30S pre-initiation complex (PIC). Upon addition of the 50S ribosomal subunit IF-1, IF-2 and IF-3 are released leaving the mature 70S translation initiation complex. The polypeptide is Translation initiation factor IF-1 (Campylobacter curvus (strain 525.92)).